Consider the following 134-residue polypeptide: Alkaline proteinase inhibitor (134 aa).

A signal peptide spans 1-26 (MVFAAWYLKFAGFVALIFSIIGGSMA). C50 and C73 form a disulfide bridge.

Belongs to the protease inhibitor I38 family.

It localises to the periplasm. Functionally, inhibitor of the alkaline protease. The protein is Alkaline proteinase inhibitor (inh) of Photorhabdus laumondii subsp. laumondii (strain DSM 15139 / CIP 105565 / TT01) (Photorhabdus luminescens subsp. laumondii).